Consider the following 641-residue polypeptide: Bifunctional protein glk (641 aa).

Residues 1–21 are disordered; sequence MSTGAQTKAAEASQHADGPRL. A glucokinase region spans residues 1–340; that stretch reads MSTGAQTKAA…QLSNRTGGAS (340 aa). 23–28 serves as a coordination point for ATP; sequence ADVGGT. The 77-residue stretch at 341-417 folds into the HTH rpiR-type domain; that stretch reads SAVFERIRQM…LKLATGLTGT (77 aa). Residues 341 to 641 are putative HTH-type transcriptional regulator; that stretch reads SAVFERIRQM…SHGAAPAAKE (301 aa). Positions 377 to 396 form a DNA-binding region, H-T-H motif; that stretch reads IVDIARKADVSQPTVIRFCR. In terms of domain architecture, SIS spans 461–600; it reads AIDILNNARR…AVGVAIRRAS (140 aa). Residues 576 to 596 traverse the membrane as a helical segment; the sequence is SMISRILHLVMIDILAVGVAI.

It in the N-terminal section; belongs to the bacterial glucokinase family.

Its subcellular location is the membrane. It carries out the reaction D-glucose + ATP = D-glucose 6-phosphate + ADP + H(+). This Burkholderia thailandensis (strain ATCC 700388 / DSM 13276 / CCUG 48851 / CIP 106301 / E264) protein is Bifunctional protein glk (glk).